Here is a 292-residue protein sequence, read N- to C-terminus: WRKY transcription factor 55 (292 aa).

Residues 133–155 form a disordered region; the sequence is VERSGASGSSTPRQRRRKDEGEE. Positions 167-235 form a DNA-binding region, WRKY; that stretch reads NTDLPPDDNH…YRGSHTCYNS (69 aa).

It belongs to the WRKY group III family.

The protein resides in the nucleus. Functionally, transcription factor. Interacts specifically with the W box (5'-(T)TGAC[CT]-3'), a frequently occurring elicitor-responsive cis-acting element. The sequence is that of WRKY transcription factor 55 (WRKY55) from Arabidopsis thaliana (Mouse-ear cress).